Reading from the N-terminus, the 160-residue chain is Ubiquitin-conjugating enzyme E2 16 (160 aa).

Residues 3–153 (SSIKRLHKEY…VRCTTYLYAK (151 aa)) form the UBC core domain. The Glycyl thioester intermediate role is filled by Cys-90.

This sequence belongs to the ubiquitin-conjugating enzyme family.

It carries out the reaction S-ubiquitinyl-[E1 ubiquitin-activating enzyme]-L-cysteine + [E2 ubiquitin-conjugating enzyme]-L-cysteine = [E1 ubiquitin-activating enzyme]-L-cysteine + S-ubiquitinyl-[E2 ubiquitin-conjugating enzyme]-L-cysteine.. It participates in protein modification; protein ubiquitination. Its function is as follows. Catalyzes the covalent attachment of ubiquitin to other proteins. In Schizosaccharomyces pombe (strain 972 / ATCC 24843) (Fission yeast), this protein is Ubiquitin-conjugating enzyme E2 16 (ubc16).